Reading from the N-terminus, the 1134-residue chain is Tyrosine-protein kinase receptor Tie-1 (1134 aa).

An N-terminal signal peptide occupies residues 1–22 (MVWWGSSLLLPTLFLASHVGAS). Residues 23-755 (VDLTLLANLR…SRAAEEGLDQ (733 aa)) lie on the Extracellular side of the membrane. In terms of domain architecture, Ig-like C2-type 1 spans 43-123 (CVSGEAGAGR…VLYVHNSPGA (81 aa)). Asn81 and Asn159 each carry an N-linked (GlcNAc...) asparagine glycan. EGF-like domains are found at residues 212–254 (GCGA…TRCE), 256–301 (ACRE…SQCQ), and 303–343 (ACAP…VHCE). Cystine bridges form between Cys226–Cys235, Cys229–Cys242, Cys244–Cys253, Cys266–Cys276, Cys270–Cys289, Cys291–Cys300, Cys313–Cys325, Cys319–Cys331, and Cys333–Cys342. The region spanning 349–440 (PQILSMATEV…GQDSRRFKVN (92 aa)) is the Ig-like C2-type 2 domain. Fibronectin type-III domains lie at 444-543 (PPVP…CPEP), 546-638 (QPWL…LPPS), and 642-736 (APRH…LGNG). 3 N-linked (GlcNAc...) asparagine glycosylation sites follow: Asn501, Asn592, and Asn705. A helical transmembrane segment spans residues 756-780 (QLVLAVVGSVSATCLTILAALLALV). The Cytoplasmic segment spans residues 781 to 1134 (CIRRSCLHRR…AGIDATAEEA (354 aa)). Positions 835 to 1114 (ITFEDLIGEG…RMLEARKAYV (280 aa)) constitute a Protein kinase domain. Residues 841–849 (IGEGNFGQV) and Lys866 contribute to the ATP site. Asp975 (proton acceptor) is an active-site residue. Tyr1003 is modified (phosphotyrosine; by autocatalysis).

It belongs to the protein kinase superfamily. Tyr protein kinase family. Tie subfamily. In terms of assembly, heterodimer with TEK/TIE2. Interacts with SVEP1 (via C-terminus). In terms of processing, phosphorylated on tyrosine residues in response to ANGPT1, most likely by TEK/TIE2. In terms of tissue distribution, specifically expressed in developing vascular endothelial cells. Abundantly expressed in lung and heart, moderately in brain, liver and kidney, and weakly in thymus, spleen and testis.

The protein localises to the cell membrane. The enzyme catalyses L-tyrosyl-[protein] + ATP = O-phospho-L-tyrosyl-[protein] + ADP + H(+). In terms of biological role, transmembrane tyrosine-protein kinase that may modulate TEK/TIE2 activity and contribute to the regulation of angiogenesis. The chain is Tyrosine-protein kinase receptor Tie-1 (Tie1) from Mus musculus (Mouse).